The chain runs to 147 residues: Large ribosomal subunit protein uL15 (147 aa).

The segment at 16-63 is disordered; the sequence is SSRARVGRGIGSGLGKTAGRGHKGSFARKGGGKIKPGFEGGQTPMQRR. Residues 23-33 are compositionally biased toward gly residues; the sequence is RGIGSGLGKTA. The segment covering 34-47 has biased composition (basic residues); it reads GRGHKGSFARKGGG.

This sequence belongs to the universal ribosomal protein uL15 family. As to quaternary structure, part of the 50S ribosomal subunit.

In terms of biological role, binds to the 23S rRNA. The protein is Large ribosomal subunit protein uL15 of Xylella fastidiosa (strain Temecula1 / ATCC 700964).